The following is a 122-amino-acid chain: MFKRSEKVAEAVHELISELLVKGLKDPRIGFVTITGVKVTDDMHLATVYFTVIGSDAEKKATEQGLNSARGFIRKEMGKSLRMRYVPDIVFKYDVSVDYGYRIESILKEISSSEQSDDKQDS.

Belongs to the RbfA family. Monomer. Binds 30S ribosomal subunits, but not 50S ribosomal subunits or 70S ribosomes.

It is found in the cytoplasm. In terms of biological role, one of several proteins that assist in the late maturation steps of the functional core of the 30S ribosomal subunit. Associates with free 30S ribosomal subunits (but not with 30S subunits that are part of 70S ribosomes or polysomes). Required for efficient processing of 16S rRNA. May interact with the 5'-terminal helix region of 16S rRNA. This is Ribosome-binding factor A from Geotalea uraniireducens (strain Rf4) (Geobacter uraniireducens).